The primary structure comprises 614 residues: Probable glycerol-3-phosphate dehydrogenase (614 aa).

57 to 85 (DLVVVGGGSTGAGCALDGATRGLKVALVD) is an FAD binding site. Positions 595-614 (MECPEEKRHRGERRLPPQEK) are disordered. Basic and acidic residues predominate over residues 598-614 (PEEKRHRGERRLPPQEK).

This sequence belongs to the FAD-dependent glycerol-3-phosphate dehydrogenase family. FAD serves as cofactor.

The protein localises to the cytoplasm. It catalyses the reaction a quinone + sn-glycerol 3-phosphate = dihydroxyacetone phosphate + a quinol. Its pathway is polyol metabolism; glycerol degradation via glycerol kinase pathway; glycerone phosphate from sn-glycerol 3-phosphate (anaerobic route): step 1/1. The protein is Probable glycerol-3-phosphate dehydrogenase of Encephalitozoon cuniculi (strain GB-M1) (Microsporidian parasite).